A 196-amino-acid chain; its full sequence is Peptidyl-tRNA hydrolase (196 aa).

Tyr-18 is a tRNA binding site. His-23 (proton acceptor) is an active-site residue. TRNA contacts are provided by Phe-69, Asn-71, and Asn-117.

It belongs to the PTH family. As to quaternary structure, monomer.

Its subcellular location is the cytoplasm. It carries out the reaction an N-acyl-L-alpha-aminoacyl-tRNA + H2O = an N-acyl-L-amino acid + a tRNA + H(+). In terms of biological role, hydrolyzes ribosome-free peptidyl-tRNAs (with 1 or more amino acids incorporated), which drop off the ribosome during protein synthesis, or as a result of ribosome stalling. Its function is as follows. Catalyzes the release of premature peptidyl moieties from peptidyl-tRNA molecules trapped in stalled 50S ribosomal subunits, and thus maintains levels of free tRNAs and 50S ribosomes. This Aliivibrio fischeri (strain MJ11) (Vibrio fischeri) protein is Peptidyl-tRNA hydrolase.